The following is a 336-amino-acid chain: Phosphate acyltransferase (336 aa).

The protein belongs to the PlsX family. As to quaternary structure, homodimer. Probably interacts with PlsY.

It localises to the cytoplasm. It catalyses the reaction a fatty acyl-[ACP] + phosphate = an acyl phosphate + holo-[ACP]. Its pathway is lipid metabolism; phospholipid metabolism. Its function is as follows. Catalyzes the reversible formation of acyl-phosphate (acyl-PO(4)) from acyl-[acyl-carrier-protein] (acyl-ACP). This enzyme utilizes acyl-ACP as fatty acyl donor, but not acyl-CoA. In Dictyoglomus turgidum (strain DSM 6724 / Z-1310), this protein is Phosphate acyltransferase.